Here is a 172-residue protein sequence, read N- to C-terminus: Translation initiation factor IF-3 (172 aa).

The protein belongs to the IF-3 family. Monomer.

It localises to the cytoplasm. IF-3 binds to the 30S ribosomal subunit and shifts the equilibrium between 70S ribosomes and their 50S and 30S subunits in favor of the free subunits, thus enhancing the availability of 30S subunits on which protein synthesis initiation begins. The protein is Translation initiation factor IF-3 of Campylobacter jejuni subsp. jejuni serotype O:6 (strain 81116 / NCTC 11828).